We begin with the raw amino-acid sequence, 144 residues long: Large ribosomal subunit protein uL15 (144 aa).

Residues 1–56 (MELNNLKPAAGAKHAKRRVGRGIGSGLGKTAGRGHKGQKSRSGGFHKVGFEGGQMP) are disordered. Residues 21 to 31 (RGIGSGLGKTA) are compositionally biased toward gly residues.

It belongs to the universal ribosomal protein uL15 family. As to quaternary structure, part of the 50S ribosomal subunit.

Binds to the 23S rRNA. This chain is Large ribosomal subunit protein uL15, found in Burkholderia multivorans (strain ATCC 17616 / 249).